The following is a 152-amino-acid chain: SsrA-binding protein (152 aa).

The protein belongs to the SmpB family.

The protein resides in the cytoplasm. In terms of biological role, required for rescue of stalled ribosomes mediated by trans-translation. Binds to transfer-messenger RNA (tmRNA), required for stable association of tmRNA with ribosomes. tmRNA and SmpB together mimic tRNA shape, replacing the anticodon stem-loop with SmpB. tmRNA is encoded by the ssrA gene; the 2 termini fold to resemble tRNA(Ala) and it encodes a 'tag peptide', a short internal open reading frame. During trans-translation Ala-aminoacylated tmRNA acts like a tRNA, entering the A-site of stalled ribosomes, displacing the stalled mRNA. The ribosome then switches to translate the ORF on the tmRNA; the nascent peptide is terminated with the 'tag peptide' encoded by the tmRNA and targeted for degradation. The ribosome is freed to recommence translation, which seems to be the essential function of trans-translation. The polypeptide is SsrA-binding protein (Lactobacillus helveticus (strain DPC 4571)).